The chain runs to 547 residues: Methionine--tRNA ligase (547 aa).

Residues 13-23 (PYANGPLHIGH) carry the 'HIGH' region motif. Zn(2+)-binding residues include Cys-145, Cys-148, Cys-158, and Cys-161. The short motif at 334–338 (QFSKS) is the 'KMSKS' region element. Lys-337 contacts ATP.

The protein belongs to the class-I aminoacyl-tRNA synthetase family. MetG type 1 subfamily. It depends on Zn(2+) as a cofactor.

The protein resides in the cytoplasm. It carries out the reaction tRNA(Met) + L-methionine + ATP = L-methionyl-tRNA(Met) + AMP + diphosphate. Is required not only for elongation of protein synthesis but also for the initiation of all mRNA translation through initiator tRNA(fMet) aminoacylation. The chain is Methionine--tRNA ligase from Thermoplasma acidophilum (strain ATCC 25905 / DSM 1728 / JCM 9062 / NBRC 15155 / AMRC-C165).